A 141-amino-acid chain; its full sequence is D-aminoacyl-tRNA deacylase (141 aa).

The Gly-cisPro motif, important for rejection of L-amino acids motif lies at 133–134 (GP).

This sequence belongs to the DTD family. In terms of assembly, homodimer.

The protein resides in the cytoplasm. It carries out the reaction glycyl-tRNA(Ala) + H2O = tRNA(Ala) + glycine + H(+). The enzyme catalyses a D-aminoacyl-tRNA + H2O = a tRNA + a D-alpha-amino acid + H(+). Its function is as follows. An aminoacyl-tRNA editing enzyme that deacylates mischarged D-aminoacyl-tRNAs. Also deacylates mischarged glycyl-tRNA(Ala), protecting cells against glycine mischarging by AlaRS. Acts via tRNA-based rather than protein-based catalysis; rejects L-amino acids rather than detecting D-amino acids in the active site. By recycling D-aminoacyl-tRNA to D-amino acids and free tRNA molecules, this enzyme counteracts the toxicity associated with the formation of D-aminoacyl-tRNA entities in vivo and helps enforce protein L-homochirality. The chain is D-aminoacyl-tRNA deacylase from Nautilia profundicola (strain ATCC BAA-1463 / DSM 18972 / AmH).